Reading from the N-terminus, the 636-residue chain is 1-deoxy-D-xylulose-5-phosphate synthase 2 (636 aa).

Thiamine diphosphate-binding positions include H78 and 119–121 (AHS). Residue D150 coordinates Mg(2+). Residues 151 to 152 (GS), N179, Y288, and E370 each bind thiamine diphosphate. Residue N179 coordinates Mg(2+).

It belongs to the transketolase family. DXPS subfamily. In terms of assembly, homodimer. Mg(2+) is required as a cofactor. Requires thiamine diphosphate as cofactor.

The catalysed reaction is D-glyceraldehyde 3-phosphate + pyruvate + H(+) = 1-deoxy-D-xylulose 5-phosphate + CO2. It participates in metabolic intermediate biosynthesis; 1-deoxy-D-xylulose 5-phosphate biosynthesis; 1-deoxy-D-xylulose 5-phosphate from D-glyceraldehyde 3-phosphate and pyruvate: step 1/1. Functionally, catalyzes the acyloin condensation reaction between C atoms 2 and 3 of pyruvate and glyceraldehyde 3-phosphate to yield 1-deoxy-D-xylulose-5-phosphate (DXP). In Jannaschia sp. (strain CCS1), this protein is 1-deoxy-D-xylulose-5-phosphate synthase 2.